The chain runs to 465 residues: MVRQIKILPKHSIGHNFSGFDKSYPEELYSSLPIIEYTQIIDYINLKTQRDYKSYILYMIIFAIFGLLPFLIALIFELFRSSLYKNRFERDFDNCLKQINELIKCRNVTFSFKFTSKIRKMQKLELIISYQDEQPKKEIVGDFIVSPEGRNILVLPPAPLDLINFDQLYLSSSQSNKFNKSKKSNKINDKTPILNNNNNNNNNNNIINYCKTKINYNNSERKTNGLKDDNFYGFKDTNYDKDLYNFMLESEYQSMIREFNTVLVRKIDIKKQLIFLLVSTILLIALIGFILIIPAAILYSKKRSHYYTHLYNDLNIMVHKYSSIYNSRGITISYCFENSDDFNNDSSPLINILIIYPKAPKGSPILTNFTNNTHQWILVPTSPNAIAPYFTILNNMAYNNNNSIIENNFNNNYNNSNNNNNSNNSNSNNNNNNNNNNNNYNNNNYNNNNNQVQVYQTEQTLNYNI.

Residues 56–76 (ILYMIIFAIFGLLPFLIALIF) form a helical membrane-spanning segment. The tract at residues 177–198 (KFNKSKKSNKINDKTPILNNNN) is disordered. The chain crosses the membrane as a helical span at residues 273-293 (LIFLLVSTILLIALIGFILII). A disordered region spans residues 411-449 (NNYNNSNNNNNSNNSNSNNNNNNNNNNNNYNNNNYNNNN).

It is found in the membrane. This is an uncharacterized protein from Dictyostelium discoideum (Social amoeba).